The sequence spans 394 residues: Elongation factor Tu (394 aa).

Positions 10 to 204 constitute a tr-type G domain; the sequence is KEHANIGTIG…AVDTYIPTPE (195 aa). Positions 19 to 26 are G1; the sequence is GHVDHGKT. 19–26 is a GTP binding site; sequence GHVDHGKT. Mg(2+) is bound at residue Thr-26. The interval 60-64 is G2; it reads GITIN. Residues 81–84 form a G3 region; sequence DCPG. Residues 81-85 and 136-139 each bind GTP; these read DCPGH and NKVD. Residues 136–139 form a G4 region; sequence NKVD. Positions 174–176 are G5; sequence SAL.

This sequence belongs to the TRAFAC class translation factor GTPase superfamily. Classic translation factor GTPase family. EF-Tu/EF-1A subfamily. Monomer.

The protein resides in the cytoplasm. The enzyme catalyses GTP + H2O = GDP + phosphate + H(+). Its function is as follows. GTP hydrolase that promotes the GTP-dependent binding of aminoacyl-tRNA to the A-site of ribosomes during protein biosynthesis. This chain is Elongation factor Tu, found in Staphylococcus aureus (strain COL).